An 85-amino-acid polypeptide reads, in one-letter code: Prosialokinin (85 aa).

Residues 1-23 (MNMFITVQIVIVLVLAVLSEAAS) form the signal peptide. Residues 24 to 74 (LPTATERKDAMDEGPNQSDEPEGSVADPSTKDDDYSDSLKQDEKYYKVRLL) constitute a propeptide that is removed on maturation. Positions 26-61 (TATERKDAMDEGPNQSDEPEGSVADPSTKDDDYSDS) are disordered. Residues 52-61 (STKDDDYSDS) are compositionally biased toward basic and acidic residues. Residue Met-84 is modified to Methionine amide.

Belongs to the tachykinin family. Expressed exclusively in the medial lobe of female salivary gland. Not detected in female carcass without head and salivary glands. Not detected in male tissues.

Its subcellular location is the secreted. Its function is as follows. Vasodilatory peptide. Facilitates mosquito blood feeding on vertebrate host. Induces nitric oxide (NO) release in blood vessels through the activation of the nitric oxide synthase (NOS3). Enhances endothelial permeability and induces edema at the site of inoculation in the host. Induces host smooth muscle contraction. Down-regulates production of Th1 cytokines, such as IL2 and IFN-gamma (IFNG), in mouse splenocytes. Up-regulates production of Th2 cytokines, such as IL4 and IL10, in mouse splenocytes. Promotes recruitment of host leukocytes, especially neutrophils and CD8+ T cells, to the bite site. Modulates cytokine production by host macrophages. Modulates populations of monocytes/macrophages, plasmacytoid dendritic cells, B cells, CD4+ T cells, NK and NKT cells, shifting mammalian immunity towards Th2 responses. Functionally, (Microbial infection) Promotes Semliki Forest virus infection in the host. (Microbial infection) Does not affect Zika virus replication in the host. This Aedes aegypti (Yellowfever mosquito) protein is Prosialokinin.